The chain runs to 336 residues: tRNA-cytidine(32) 2-sulfurtransferase (336 aa).

Positions 1-42 (MNAPDTLTGLEANAPVTEEAPAASEAERKRAHTRREQKEQYE) are disordered. A PP-loop motif motif is present at residues 75-80 (SGGKDS). Cys-150, Cys-153, and Cys-241 together coordinate [4Fe-4S] cluster. A disordered region spans residues 301 to 328 (PHGDIAFDEEPCSADSASNQTQRPSQTV). Over residues 315 to 328 (DSASNQTQRPSQTV) the composition is skewed to polar residues.

The protein belongs to the TtcA family. As to quaternary structure, homodimer. Mg(2+) serves as cofactor. The cofactor is [4Fe-4S] cluster.

The protein resides in the cytoplasm. The enzyme catalyses cytidine(32) in tRNA + S-sulfanyl-L-cysteinyl-[cysteine desulfurase] + AH2 + ATP = 2-thiocytidine(32) in tRNA + L-cysteinyl-[cysteine desulfurase] + A + AMP + diphosphate + H(+). The protein operates within tRNA modification. Its function is as follows. Catalyzes the ATP-dependent 2-thiolation of cytidine in position 32 of tRNA, to form 2-thiocytidine (s(2)C32). The sulfur atoms are provided by the cysteine/cysteine desulfurase (IscS) system. This Paraburkholderia phymatum (strain DSM 17167 / CIP 108236 / LMG 21445 / STM815) (Burkholderia phymatum) protein is tRNA-cytidine(32) 2-sulfurtransferase.